Consider the following 441-residue polypeptide: Arginine biosynthesis bifunctional protein ArgJ, mitochondrial (441 aa).

The transit peptide at 1-8 directs the protein to the mitochondrion; that stretch reads MRISSTLL. Threonine 177, lysine 204, threonine 215, glutamate 301, asparagine 436, and serine 441 together coordinate substrate. Catalysis depends on threonine 215, which acts as the Nucleophile.

Belongs to the ArgJ family. In terms of assembly, heterodimer of an alpha and a beta chain. In terms of processing, the alpha and beta chains are autoproteolytically processed from a single precursor protein within the mitochondrion.

Its subcellular location is the mitochondrion matrix. It carries out the reaction N(2)-acetyl-L-ornithine + L-glutamate = N-acetyl-L-glutamate + L-ornithine. The catalysed reaction is L-glutamate + acetyl-CoA = N-acetyl-L-glutamate + CoA + H(+). The protein operates within amino-acid biosynthesis; L-arginine biosynthesis; L-ornithine and N-acetyl-L-glutamate from L-glutamate and N(2)-acetyl-L-ornithine (cyclic): step 1/1. It functions in the pathway amino-acid biosynthesis; L-arginine biosynthesis; N(2)-acetyl-L-ornithine from L-glutamate: step 1/4. Its activity is regulated as follows. Inhibited by ornithine. Catalyzes two activities which are involved in the cyclic version of arginine biosynthesis: the synthesis of acetylglutamate from glutamate and acetyl-CoA, and of ornithine by transacetylation between acetylornithine and glutamate. The protein is Arginine biosynthesis bifunctional protein ArgJ, mitochondrial of Saccharomyces cerevisiae (strain ATCC 204508 / S288c) (Baker's yeast).